Consider the following 269-residue polypeptide: Chymotrypsin-like elastase family member 2A (269 aa).

The N-terminal stretch at 1-16 (MIRALLLSTLVAGALS) is a signal peptide. Residues 17-28 (CGVPTYPPQLSR) constitute a propeptide, activation peptide. One can recognise a Peptidase S1 domain in the interval 29–267 (VVGGEDARPN…YNDWISSVIE (239 aa)). A disulfide bond links C58 and C74. Active-site charge relay system residues include H73 and D121. 3 disulfides stabilise this stretch: C155-C222, C186-C202, and C212-C243. S216 serves as the catalytic Charge relay system.

It belongs to the peptidase S1 family. Elastase subfamily. As to quaternary structure, interacts with CPA1. Interacts with SERPINA1. Pancreas.

Its subcellular location is the secreted. It carries out the reaction Preferential cleavage: Leu-|-Xaa, Met-|-Xaa and Phe-|-Xaa. Hydrolyzes elastin.. In terms of biological role, elastase that enhances insulin signaling and might have a physiologic role in cellular glucose metabolism. Circulates in plasma and reduces platelet hyperactivation, triggers both insulin secretion and degradation, and increases insulin sensitivity. This chain is Chymotrypsin-like elastase family member 2A (CELA2A), found in Bos taurus (Bovine).